A 532-amino-acid chain; its full sequence is Pentatricopeptide repeat-containing protein At4g02820, mitochondrial (532 aa).

The transit peptide at 1-28 (MNKNMLVRSARPTLASIHRLFSAAAAAT) directs the protein to the mitochondrion. Residues 35-56 (PVVKPRSGGGKGGESANKKETV) form a disordered region. 10 PPR repeats span residues 161–195 (GHAACTSLLHSYVQNKLSDKAEALFEKMGECGFLK), 196–226 (SCLPYNHMLSMYISRGQFEKVPVLIKELKIR), 230–264 (DIVTYNLWLTAFASGNDVEGAEKVYLKAKEEKLNP), 265–295 (DWVTYSVLTNLYAKTDNVEKARLALKEMEKL), 300–330 (NRVAYASLISLHANLGDKDGVNLTWKKVKSS), 335–365 (NDAEYLSMISAVVKLGEFEQAKGLYDEWESV), 370–404 (DARIPNLILAEYMNRDEVLLGEKFYERIVEKGINP), 405–435 (SYSTWEILTWAYLKRKDMEKVLDCFGKAIDS), 442–472 (NVRLVKGACKELEEQGNVKGAEKLMTLLQKA), and 476–512 (NTQLYNSLLRTYAKAGEMALIVEERMAKDNVELDEET).

This sequence belongs to the PPR family. P subfamily.

It is found in the mitochondrion. The protein is Pentatricopeptide repeat-containing protein At4g02820, mitochondrial of Arabidopsis thaliana (Mouse-ear cress).